Consider the following 558-residue polypeptide: Phosphatidylserine lipase ABHD16A (558 aa).

2 consecutive transmembrane segments (helical) span residues isoleucine 60–phenylalanine 80 and valine 93–leucine 113. The Cytoplasmic portion of the chain corresponds to arginine 114–leucine 558. In terms of domain architecture, AB hydrolase-1 spans leucine 281–leucine 407. Residues serine 355, aspartate 430, and histidine 507 each act as charge relay system in the active site.

This sequence belongs to the AB hydrolase superfamily. ABHD16 family.

It localises to the membrane. The enzyme catalyses 1-heptadecanoyl-2-(5Z,8Z,11Z,14Z-eicosatetraenoyl)-sn-glycero-3-phosphoserine + H2O = 1-heptadecanoyl-sn-glycero-3-phosphoserine + (5Z,8Z,11Z,14Z)-eicosatetraenoate + H(+). It carries out the reaction 1-hexadecanoyl-2-(9Z-octadecenoyl)-sn-glycero-3-phospho-L-serine + H2O = 1-hexadecanoyl-sn-glycero-3-phospho-L-serine + (9Z)-octadecenoate + H(+). It catalyses the reaction 1-octadecanoyl-2-(9Z,12Z-octadecadienoyl)-sn-glycero-3-phosphoserine + H2O = 1-octadecanoyl-sn-glycero-3-phosphoserine + (9Z,12Z)-octadecadienoate + H(+). The catalysed reaction is 1-heptadecanoyl-2-(5Z,8Z,11Z,14Z-eicosatetraenoyl)-sn-glycero-3-phosphocholine + H2O = 1-heptadecanoyl-sn-glycero-3-phosphocholine + (5Z,8Z,11Z,14Z)-eicosatetraenoate + H(+). The enzyme catalyses 1-hexadecanoyl-2-(9Z-octadecenoyl)-sn-glycero-3-phosphoglycerol + H2O = 1-hexadecanoyl-sn-glycero-3-phosphoglycerol + (9Z)-octadecenoate + H(+). It carries out the reaction 1-hexadecanoyl-2-(9Z-octadecenoyl)-sn-glycero-3-phospho-(1D-myo-inositol) + H2O = 1-hexadecanoyl-sn-glycero-3-phospho-(1D-myo-inositol) + (9Z)-octadecenoate + H(+). It catalyses the reaction 1-heptadecanoyl-2-(5Z,8Z,11Z,14Z-eicosatetraenoyl)-sn-glycero-3-phosphoethanolamine + H2O = 1-heptadecanoyl-sn-glycero-3-phosphoethanolamine + (5Z,8Z,11Z,14Z)-eicosatetraenoate + H(+). The catalysed reaction is 1-hexadecanoyl-2-(9Z-octadecenoyl)-sn-glycero-3-phospho-(1'-sn-glycerol) + H2O = 1-hexadecanoyl-sn-glycero-3-phospho-(1'-sn-glycerol) + (9Z)-octadecenoate + H(+). The enzyme catalyses Hydrolyzes glycerol monoesters of long-chain fatty acids.. It carries out the reaction 1-tetradecanoylglycerol + H2O = tetradecanoate + glycerol + H(+). It catalyses the reaction 2-hexadecanoylglycerol + H2O = glycerol + hexadecanoate + H(+). The catalysed reaction is 1-(9Z-octadecenoyl)-glycerol + H2O = glycerol + (9Z)-octadecenoate + H(+). The enzyme catalyses 2-(9Z-octadecenoyl)-glycerol + H2O = glycerol + (9Z)-octadecenoate + H(+). It carries out the reaction 2-(9Z,12Z-octadecadienoyl)-glycerol + H2O = (9Z,12Z)-octadecadienoate + glycerol + H(+). It catalyses the reaction 1-(5Z,8Z,11Z,14Z-eicosatetraenoyl)-glycerol + H2O = glycerol + (5Z,8Z,11Z,14Z)-eicosatetraenoate + H(+). The catalysed reaction is 2-(5Z,8Z,11Z,14Z-eicosatetraenoyl)-glycerol + H2O = glycerol + (5Z,8Z,11Z,14Z)-eicosatetraenoate + H(+). The enzyme catalyses prostaglandin D2-1-glycerol ester + H2O = prostaglandin D2 + glycerol + H(+). It carries out the reaction 2-glyceryl-15-deoxy-Delta(12,14)-prostaglandin J2 + H2O = 15-deoxy-Delta(12,14)-prostaglandin J2 + glycerol + H(+). It catalyses the reaction 1-(9Z,12Z-octadecadienoyl)-glycerol + H2O = (9Z,12Z)-octadecadienoate + glycerol + H(+). Functionally, phosphatidylserine (PS) lipase that mediates the hydrolysis of phosphatidylserine to generate lysophosphatidylserine (LPS). LPS constitutes a class of signaling lipids that regulates immunological and neurological processes. Has no activity towards diacylglycerol, triacylglycerol or lysophosphatidylserine lipase. Also has monoacylglycerol lipase activity, with preference for 1-(9Z,12Z-octadecadienoyl)-glycerol (1-LG) and 2-glyceryl-15-deoxy-Delta(12,14)-prostaglandin J2 (15d-PGJ(2)-G). The chain is Phosphatidylserine lipase ABHD16A from Rattus norvegicus (Rat).